A 25-amino-acid chain; its full sequence is Cytochrome c oxidase polypeptide VIIc (25 aa).

Positions 1–25 are disordered; sequence SHYSEGPGQNLPFSVQNKXRLLGMM.

The protein belongs to the cytochrome c oxidase VIIc family. As to quaternary structure, component of the cytochrome c oxidase (complex IV, CIV), a multisubunit enzyme composed of 14 subunits. The complex is composed of a catalytic core of 3 subunits MT-CO1, MT-CO2 and MT-CO3, encoded in the mitochondrial DNA, and 11 supernumerary subunits COX4I, COX5A, COX5B, COX6A, COX6B, COX6C, COX7A, COX7B, COX7C, COX8 and NDUFA4, which are encoded in the nuclear genome. The complex exists as a monomer or a dimer and forms supercomplexes (SCs) in the inner mitochondrial membrane with NADH-ubiquinone oxidoreductase (complex I, CI) and ubiquinol-cytochrome c oxidoreductase (cytochrome b-c1 complex, complex III, CIII), resulting in different assemblies (supercomplex SCI(1)III(2)IV(1) and megacomplex MCI(2)III(2)IV(2)). Interacts with RAB5IF.

Its subcellular location is the mitochondrion inner membrane. The protein operates within energy metabolism; oxidative phosphorylation. Its function is as follows. Component of the cytochrome c oxidase, the last enzyme in the mitochondrial electron transport chain which drives oxidative phosphorylation. The respiratory chain contains 3 multisubunit complexes succinate dehydrogenase (complex II, CII), ubiquinol-cytochrome c oxidoreductase (cytochrome b-c1 complex, complex III, CIII) and cytochrome c oxidase (complex IV, CIV), that cooperate to transfer electrons derived from NADH and succinate to molecular oxygen, creating an electrochemical gradient over the inner membrane that drives transmembrane transport and the ATP synthase. Cytochrome c oxidase is the component of the respiratory chain that catalyzes the reduction of oxygen to water. Electrons originating from reduced cytochrome c in the intermembrane space (IMS) are transferred via the dinuclear copper A center (CU(A)) of subunit 2 and heme A of subunit 1 to the active site in subunit 1, a binuclear center (BNC) formed by heme A3 and copper B (CU(B)). The BNC reduces molecular oxygen to 2 water molecules using 4 electrons from cytochrome c in the IMS and 4 protons from the mitochondrial matrix. This chain is Cytochrome c oxidase polypeptide VIIc, found in Oncorhynchus mykiss (Rainbow trout).